We begin with the raw amino-acid sequence, 257 residues long: MAIHPTAIVEAGAQVDPSCEIGPFAVIGPLVRMGPGNSVGPHAVVTGRTTLGASNRIFPHAVIGGIPQDLKYRGEDTALVIGDRNTFREFATVNLGTAGGGGVTRIGSGGLFMASSHIGHDCQVGDGAIIANSVAIAGHVLIEDHVHFGGLSASHQFCRVGRLAFVGGMTGVAMDVAPYCTVAGARGELAGLNAIGMQRAGLTEEQIGRVKQAYKIVFRSSLGLAEAIAQLEAELAGHPETDHFIAFLKGSQRGITR.

It belongs to the transferase hexapeptide repeat family. LpxA subfamily. Homotrimer.

Its subcellular location is the cytoplasm. It carries out the reaction a (3R)-hydroxyacyl-[ACP] + UDP-N-acetyl-alpha-D-glucosamine = a UDP-3-O-[(3R)-3-hydroxyacyl]-N-acetyl-alpha-D-glucosamine + holo-[ACP]. It functions in the pathway glycolipid biosynthesis; lipid IV(A) biosynthesis; lipid IV(A) from (3R)-3-hydroxytetradecanoyl-[acyl-carrier-protein] and UDP-N-acetyl-alpha-D-glucosamine: step 1/6. Its function is as follows. Involved in the biosynthesis of lipid A, a phosphorylated glycolipid that anchors the lipopolysaccharide to the outer membrane of the cell. This is Acyl-[acyl-carrier-protein]--UDP-N-acetylglucosamine O-acyltransferase from Anaeromyxobacter sp. (strain K).